The chain runs to 141 residues: ATP synthase epsilon chain (141 aa).

The protein belongs to the ATPase epsilon chain family. F-type ATPases have 2 components, CF(1) - the catalytic core - and CF(0) - the membrane proton channel. CF(1) has five subunits: alpha(3), beta(3), gamma(1), delta(1), epsilon(1). CF(0) has three main subunits: a, b and c.

It is found in the cell inner membrane. Its function is as follows. Produces ATP from ADP in the presence of a proton gradient across the membrane. The polypeptide is ATP synthase epsilon chain (Paraburkholderia phymatum (strain DSM 17167 / CIP 108236 / LMG 21445 / STM815) (Burkholderia phymatum)).